A 264-amino-acid chain; its full sequence is Thymidylate synthase (264 aa).

Residue arginine 21 participates in dUMP binding. Residue histidine 51 participates in (6R)-5,10-methylene-5,6,7,8-tetrahydrofolate binding. A dUMP-binding site is contributed by 126–127 (RR). Cysteine 146 functions as the Nucleophile in the catalytic mechanism. DUMP-binding positions include 166–169 (RSAD), asparagine 177, and 207–209 (HLY). Aspartate 169 is a binding site for (6R)-5,10-methylene-5,6,7,8-tetrahydrofolate. Serine 263 serves as a coordination point for (6R)-5,10-methylene-5,6,7,8-tetrahydrofolate.

It belongs to the thymidylate synthase family. Bacterial-type ThyA subfamily. As to quaternary structure, homodimer.

Its subcellular location is the cytoplasm. The catalysed reaction is dUMP + (6R)-5,10-methylene-5,6,7,8-tetrahydrofolate = 7,8-dihydrofolate + dTMP. The protein operates within pyrimidine metabolism; dTTP biosynthesis. Its function is as follows. Catalyzes the reductive methylation of 2'-deoxyuridine-5'-monophosphate (dUMP) to 2'-deoxythymidine-5'-monophosphate (dTMP) while utilizing 5,10-methylenetetrahydrofolate (mTHF) as the methyl donor and reductant in the reaction, yielding dihydrofolate (DHF) as a by-product. This enzymatic reaction provides an intracellular de novo source of dTMP, an essential precursor for DNA biosynthesis. The polypeptide is Thymidylate synthase (Laribacter hongkongensis (strain HLHK9)).